Here is a 150-residue protein sequence, read N- to C-terminus: UPF0178 protein Shew_2726 (150 aa).

It belongs to the UPF0178 family.

This chain is UPF0178 protein Shew_2726, found in Shewanella loihica (strain ATCC BAA-1088 / PV-4).